Consider the following 468-residue polypeptide: Ribulose bisphosphate carboxylase large chain (468 aa).

Lys-4 bears the N6,N6,N6-trimethyllysine mark. 2 residues coordinate substrate: Asn-113 and Thr-163. The active-site Proton acceptor is Lys-165. A substrate-binding site is contributed by Lys-167. Positions 191, 193, and 194 each coordinate Mg(2+). N6-carboxylysine is present on Lys-191. The active-site Proton acceptor is the His-284. Substrate-binding residues include Arg-285, His-317, and Ser-369.

It belongs to the RuBisCO large chain family. Type I subfamily. Heterohexadecamer of 8 large chains and 8 small chains; disulfide-linked. The disulfide link is formed within the large subunit homodimers. Mg(2+) is required as a cofactor. Post-translationally, the disulfide bond which can form in the large chain dimeric partners within the hexadecamer appears to be associated with oxidative stress and protein turnover.

It is found in the plastid. Its subcellular location is the chloroplast. It carries out the reaction 2 (2R)-3-phosphoglycerate + 2 H(+) = D-ribulose 1,5-bisphosphate + CO2 + H2O. The enzyme catalyses D-ribulose 1,5-bisphosphate + O2 = 2-phosphoglycolate + (2R)-3-phosphoglycerate + 2 H(+). RuBisCO catalyzes two reactions: the carboxylation of D-ribulose 1,5-bisphosphate, the primary event in carbon dioxide fixation, as well as the oxidative fragmentation of the pentose substrate in the photorespiration process. Both reactions occur simultaneously and in competition at the same active site. This is Ribulose bisphosphate carboxylase large chain from Pandorea jasminoides (Bower vine).